A 502-amino-acid chain; its full sequence is Glutamate dehydrogenase, mitochondrial (502 aa).

96–98 (HHR) serves as a coordination point for NAD(+). Substrate-binding residues include lysine 102 and lysine 126. Aspartate 131 is an NAD(+) binding site. The active site involves lysine 138. Serine 394 contributes to the substrate binding site.

This sequence belongs to the Glu/Leu/Phe/Val dehydrogenases family. As to quaternary structure, homohexamer.

It is found in the mitochondrion matrix. It carries out the reaction L-glutamate + NAD(+) + H2O = 2-oxoglutarate + NH4(+) + NADH + H(+). It catalyses the reaction L-glutamate + NADP(+) + H2O = 2-oxoglutarate + NH4(+) + NADPH + H(+). With respect to regulation, subject to allosteric regulation. Activated by AMP and ADP. The polypeptide is Glutamate dehydrogenase, mitochondrial (gluD) (Dictyostelium discoideum (Social amoeba)).